We begin with the raw amino-acid sequence, 528 residues long: Probable serine/threonine-protein kinase DDB_G0282417 (528 aa).

Positions 49 to 77 (NNNNNNNNNNNNNNNNNNNNNNNNNNKNN) are enriched in low complexity. Residues 49 to 84 (NNNNNNNNNNNNNNNNNNNNNNNNNNKNNNDGDDAA) are disordered. One can recognise a Protein kinase domain in the interval 136 to 466 (QQNRVLIGEG…ESLINNHQYS (331 aa)). ATP contacts are provided by residues 142 to 150 (IGEGHYGKV) and lysine 166. Aspartate 266 functions as the Proton acceptor in the catalytic mechanism.

Belongs to the protein kinase superfamily. Ser/Thr protein kinase family.

It catalyses the reaction L-seryl-[protein] + ATP = O-phospho-L-seryl-[protein] + ADP + H(+). The catalysed reaction is L-threonyl-[protein] + ATP = O-phospho-L-threonyl-[protein] + ADP + H(+). This chain is Probable serine/threonine-protein kinase DDB_G0282417, found in Dictyostelium discoideum (Social amoeba).